The following is a 399-amino-acid chain: Ankyrin repeat domain-containing protein 65 (399 aa).

ANK repeat units follow at residues 40 to 69 (QGWG…SVEE), 73 to 102 (AGRT…PVGA), 106 to 135 (AGRT…SAAA), 139 to 168 (TGLT…PGPA), 176 to 205 (RGWT…GLDG), 207 to 231 (LLVA…RVDA), 235 to 264 (AGAT…DPGI), 268 to 297 (HGRS…EVDA), 301 to 330 (LGLT…QVDA), and 334 to 363 (LRKT…SPTL). Residues 377-399 (DLPQALPELGGGEKECEGIESTG) are disordered.

This is Ankyrin repeat domain-containing protein 65 (ANKRD65) from Homo sapiens (Human).